The primary structure comprises 463 residues: ATP-dependent protease ATPase subunit HslU (463 aa).

Residues Ile-19 and Gly-61 to Glu-66 contribute to the ATP site. Residues Phe-154 to Lys-175 are disordered. Over residues Gly-156–Asp-165 the composition is skewed to polar residues. ATP-binding residues include Asp-277, Glu-341, and Arg-413.

This sequence belongs to the ClpX chaperone family. HslU subfamily. A double ring-shaped homohexamer of HslV is capped on each side by a ring-shaped HslU homohexamer. The assembly of the HslU/HslV complex is dependent on binding of ATP.

Its subcellular location is the cytoplasm. ATPase subunit of a proteasome-like degradation complex; this subunit has chaperone activity. The binding of ATP and its subsequent hydrolysis by HslU are essential for unfolding of protein substrates subsequently hydrolyzed by HslV. HslU recognizes the N-terminal part of its protein substrates and unfolds these before they are guided to HslV for hydrolysis. The polypeptide is ATP-dependent protease ATPase subunit HslU (Bacillus mycoides (strain KBAB4) (Bacillus weihenstephanensis)).